The sequence spans 179 residues: Large ribosomal subunit protein uL10 (179 aa).

Belongs to the universal ribosomal protein uL10 family. As to quaternary structure, part of the ribosomal stalk of the 50S ribosomal subunit. The N-terminus interacts with L11 and the large rRNA to form the base of the stalk. The C-terminus forms an elongated spine to which L12 dimers bind in a sequential fashion forming a multimeric L10(L12)X complex.

Functionally, forms part of the ribosomal stalk, playing a central role in the interaction of the ribosome with GTP-bound translation factors. This chain is Large ribosomal subunit protein uL10, found in Mycolicibacterium gilvum (strain PYR-GCK) (Mycobacterium gilvum (strain PYR-GCK)).